A 142-amino-acid chain; its full sequence is Large ribosomal subunit protein uL23 (142 aa).

The protein belongs to the universal ribosomal protein uL23 family.

This Kluyveromyces lactis (strain ATCC 8585 / CBS 2359 / DSM 70799 / NBRC 1267 / NRRL Y-1140 / WM37) (Yeast) protein is Large ribosomal subunit protein uL23 (RPL25).